The sequence spans 134 residues: Small ribosomal subunit protein uS8 (134 aa).

Belongs to the universal ribosomal protein uS8 family. In terms of assembly, part of the 30S ribosomal subunit. Contacts proteins S5 and S12.

Functionally, one of the primary rRNA binding proteins, it binds directly to 16S rRNA central domain where it helps coordinate assembly of the platform of the 30S subunit. This Synechococcus sp. (strain JA-3-3Ab) (Cyanobacteria bacterium Yellowstone A-Prime) protein is Small ribosomal subunit protein uS8.